Consider the following 55-residue polypeptide: ATP synthase F(0) complex subunit 8 (55 aa).

The helical transmembrane segment at 10–30 threads the bilayer; the sequence is FPIMMLSWLIFSLIIQPKLLL. Residues 35–55 form a disordered region; that stretch reads NPPSNKTTTTTRSNPWTWPWT. Positions 37–55 are enriched in low complexity; it reads PSNKTTTTTRSNPWTWPWT.

This sequence belongs to the ATPase protein 8 family. As to quaternary structure, component of the ATP synthase complex composed at least of ATP5F1A/subunit alpha, ATP5F1B/subunit beta, ATP5MC1/subunit c (homooctomer), MT-ATP6/subunit a, MT-ATP8/subunit 8, ATP5ME/subunit e, ATP5MF/subunit f, ATP5MG/subunit g, ATP5MK/subunit k, ATP5MJ/subunit j, ATP5F1C/subunit gamma, ATP5F1D/subunit delta, ATP5F1E/subunit epsilon, ATP5PF/subunit F6, ATP5PB/subunit b, ATP5PD/subunit d, ATP5PO/subunit OSCP. ATP synthase complex consists of a soluble F(1) head domain (subunits alpha(3) and beta(3)) - the catalytic core - and a membrane F(0) domain - the membrane proton channel (subunits c, a, 8, e, f, g, k and j). These two domains are linked by a central stalk (subunits gamma, delta, and epsilon) rotating inside the F1 region and a stationary peripheral stalk (subunits F6, b, d, and OSCP).

The protein localises to the mitochondrion membrane. Its function is as follows. Subunit 8, of the mitochondrial membrane ATP synthase complex (F(1)F(0) ATP synthase or Complex V) that produces ATP from ADP in the presence of a proton gradient across the membrane which is generated by electron transport complexes of the respiratory chain. ATP synthase complex consist of a soluble F(1) head domain - the catalytic core - and a membrane F(1) domain - the membrane proton channel. These two domains are linked by a central stalk rotating inside the F(1) region and a stationary peripheral stalk. During catalysis, ATP synthesis in the catalytic domain of F(1) is coupled via a rotary mechanism of the central stalk subunits to proton translocation. In vivo, can only synthesize ATP although its ATP hydrolase activity can be activated artificially in vitro. Part of the complex F(0) domain. This Opisthocomus hoazin (Hoatzin) protein is ATP synthase F(0) complex subunit 8.